The sequence spans 178 residues: ATP synthase subunit delta (178 aa).

This sequence belongs to the ATPase delta chain family. F-type ATPases have 2 components, F(1) - the catalytic core - and F(0) - the membrane proton channel. F(1) has five subunits: alpha(3), beta(3), gamma(1), delta(1), epsilon(1). F(0) has three main subunits: a(1), b(2) and c(10-14). The alpha and beta chains form an alternating ring which encloses part of the gamma chain. F(1) is attached to F(0) by a central stalk formed by the gamma and epsilon chains, while a peripheral stalk is formed by the delta and b chains.

It localises to the cell inner membrane. F(1)F(0) ATP synthase produces ATP from ADP in the presence of a proton or sodium gradient. F-type ATPases consist of two structural domains, F(1) containing the extramembraneous catalytic core and F(0) containing the membrane proton channel, linked together by a central stalk and a peripheral stalk. During catalysis, ATP synthesis in the catalytic domain of F(1) is coupled via a rotary mechanism of the central stalk subunits to proton translocation. In terms of biological role, this protein is part of the stalk that links CF(0) to CF(1). It either transmits conformational changes from CF(0) to CF(1) or is implicated in proton conduction. The chain is ATP synthase subunit delta from Pelodictyon phaeoclathratiforme (strain DSM 5477 / BU-1).